Reading from the N-terminus, the 296-residue chain is Ribose import binding protein RbsB (296 aa).

The first 25 residues, 1–25 (MNMKKLATLVSAVALSATVSANAMA), serve as a signal peptide directing secretion.

Belongs to the bacterial solute-binding protein 2 family. As to quaternary structure, the complex is composed of an ATP-binding protein (RbsA), two transmembrane proteins (RbsC) and a solute-binding protein (RbsB).

It localises to the periplasm. Its function is as follows. Part of the ABC transporter complex RbsABC involved in ribose import. Binds ribose. Also serves as the primary chemoreceptor for chemotaxis. This chain is Ribose import binding protein RbsB, found in Escherichia coli (strain K12).